A 333-amino-acid chain; its full sequence is DNA repair and recombination protein RadA (333 aa).

An ATP-binding site is contributed by 127 to 134; the sequence is GEFGSGKT.

This sequence belongs to the eukaryotic RecA-like protein family.

In terms of biological role, involved in DNA repair and in homologous recombination. Binds and assemble on single-stranded DNA to form a nucleoprotein filament. Hydrolyzes ATP in a ssDNA-dependent manner and promotes DNA strand exchange between homologous DNA molecules. The sequence is that of DNA repair and recombination protein RadA from Pyrobaculum aerophilum (strain ATCC 51768 / DSM 7523 / JCM 9630 / CIP 104966 / NBRC 100827 / IM2).